Consider the following 359-residue polypeptide: tRNA-specific 2-thiouridylase MnmA (359 aa).

Residues 9-16 (GISGGVDS) and Met-35 each bind ATP. Positions 95–97 (NPD) are interaction with target base in tRNA. Residue Cys-100 is the Nucleophile of the active site. A disulfide bridge links Cys-100 with Cys-197. ATP is bound at residue Gly-124. An interaction with tRNA region spans residues 147-149 (KDQ). Cys-197 (cysteine persulfide intermediate) is an active-site residue. An interaction with tRNA region spans residues 309 to 310 (RY).

Belongs to the MnmA/TRMU family.

Its subcellular location is the cytoplasm. It carries out the reaction S-sulfanyl-L-cysteinyl-[protein] + uridine(34) in tRNA + AH2 + ATP = 2-thiouridine(34) in tRNA + L-cysteinyl-[protein] + A + AMP + diphosphate + H(+). Catalyzes the 2-thiolation of uridine at the wobble position (U34) of tRNA, leading to the formation of s(2)U34. This Francisella philomiragia subsp. philomiragia (strain ATCC 25017 / CCUG 19701 / FSC 153 / O#319-036) protein is tRNA-specific 2-thiouridylase MnmA.